The sequence spans 298 residues: Protein FAM221A (298 aa).

Over residues 241–257 the composition is skewed to polar residues; that stretch reads SSPETLTDVGTSSQVSS. Residues 241 to 263 form a disordered region; that stretch reads SSPETLTDVGTSSQVSSLRRPEE.

This sequence belongs to the FAM221 family.

The chain is Protein FAM221A (FAM221A) from Homo sapiens (Human).